Consider the following 154-residue polypeptide: 6,7-dimethyl-8-ribityllumazine synthase (154 aa).

Residues phenylalanine 22, 56-58, and 80-82 contribute to the 5-amino-6-(D-ribitylamino)uracil site; these read SFE and AVI. 85–86 provides a ligand contact to (2S)-2-hydroxy-3-oxobutyl phosphate; sequence ST. Histidine 88 (proton donor) is an active-site residue. Tyrosine 113 provides a ligand contact to 5-amino-6-(D-ribitylamino)uracil. Arginine 127 is a (2S)-2-hydroxy-3-oxobutyl phosphate binding site.

It belongs to the DMRL synthase family. Forms an icosahedral capsid composed of 60 subunits, arranged as a dodecamer of pentamers.

It catalyses the reaction (2S)-2-hydroxy-3-oxobutyl phosphate + 5-amino-6-(D-ribitylamino)uracil = 6,7-dimethyl-8-(1-D-ribityl)lumazine + phosphate + 2 H2O + H(+). It participates in cofactor biosynthesis; riboflavin biosynthesis; riboflavin from 2-hydroxy-3-oxobutyl phosphate and 5-amino-6-(D-ribitylamino)uracil: step 1/2. Catalyzes the formation of 6,7-dimethyl-8-ribityllumazine by condensation of 5-amino-6-(D-ribitylamino)uracil with 3,4-dihydroxy-2-butanone 4-phosphate. This is the penultimate step in the biosynthesis of riboflavin. This chain is 6,7-dimethyl-8-ribityllumazine synthase, found in Persephonella marina (strain DSM 14350 / EX-H1).